Here is a 464-residue protein sequence, read N- to C-terminus: MATENVGTVVQIIGPVIDIRFERGKLPSIYNAIKINSEGIDIVAEVMQYTGNDTVRCVSMNSTDGLKRGMKAVDTGEPIKVPVGKEVLGRVFNVLGEPIDGKGDVKATTYLPIHREAPGLDEQKPVTEILETGIKVIDLLAPYAKGGKIGLFGGAGVGKTVLIMELIRNIATEHGGYSVFTGVGERSREGNDLWNEMNESGVIEKTALVFGQMNEPPGSRMRVGLTGLTMAEYFRDELGQDVLLFIDNIFRFIQAGSEVSALLGRIPSAVGYQPTLATEMGALQERITSTKKGSITSVQAVYVPADDLTDPAPATTFTHLDATTVLSRHIVEQGIYPAVDPLDSTSRVLDRRIVGDEHYTVARKVQEILQRYKELQDIIAILGLDELSEEDKLIVFRARKIQRFLSQPFFVAEAYTGYKGKFVRIKDTIRGFKEIIEGKMDDIPEAAFYMAGTIDEVYERAKKM.

Gly153–Thr160 is a binding site for ATP.

This sequence belongs to the ATPase alpha/beta chains family. In terms of assembly, F-type ATPases have 2 components, CF(1) - the catalytic core - and CF(0) - the membrane proton channel. CF(1) has five subunits: alpha(3), beta(3), gamma(1), delta(1), epsilon(1). CF(0) has three main subunits: a(1), b(2) and c(9-12). The alpha and beta chains form an alternating ring which encloses part of the gamma chain. CF(1) is attached to CF(0) by a central stalk formed by the gamma and epsilon chains, while a peripheral stalk is formed by the delta and b chains.

The protein resides in the cell membrane. It catalyses the reaction ATP + H2O + 4 H(+)(in) = ADP + phosphate + 5 H(+)(out). Functionally, produces ATP from ADP in the presence of a proton gradient across the membrane. The catalytic sites are hosted primarily by the beta subunits. The protein is ATP synthase subunit beta of Acetivibrio thermocellus (strain ATCC 27405 / DSM 1237 / JCM 9322 / NBRC 103400 / NCIMB 10682 / NRRL B-4536 / VPI 7372) (Clostridium thermocellum).